Reading from the N-terminus, the 292-residue chain is MAKIYSPSFPGTLCLCIFTLLTLMFIRVSARPATFVEDFKAAWSESHIRQMEDGKAIQLVLDQSTGCGFASKRKYLFGRVSMKIKLIPGDSAGTVTAFYMNSDTATVRDELDFEFLGNRSGQPYSVQTNIFAHGKGDREQRVNLWFDPSMDYHTYTILWSHKHIVFYVDDVPIREYKNNEAKNIAYPTSQPMGVYSTLWEADDWATRGGLEKIDWSKAPFYAYYKDFDIEGCPVPGPTFCPSNPHNWWEGYAYQSLNAVEARRYRWVRVNHMVYDYCTDRSRFPVPPPECRA.

The signal sequence occupies residues 1–30 (MAKIYSPSFPGTLCLCIFTLLTLMFIRVSA). The region spanning 31–224 (RPATFVEDFK…WSKAPFYAYY (194 aa)) is the GH16 domain. Glutamate 110 acts as the Nucleophile in catalysis. Glutamate 114 (proton donor) is an active-site residue. Glutamate 114 contributes to the xyloglucan binding site. Asparagine 118 is a glycosylation site (N-linked (GlcNAc...) asparagine). Residues 127 to 129 (QTN), 137 to 139 (DRE), 203 to 204 (DW), and glycine 208 contribute to the xyloglucan site. Intrachain disulfides connect cysteine 232–cysteine 240 and cysteine 277–cysteine 290. Arginine 282 contributes to the xyloglucan binding site.

Belongs to the glycosyl hydrolase 16 family. XTH group 1 subfamily. In terms of processing, contains at least one intrachain disulfide bond essential for its enzymatic activity.

It is found in the secreted. The protein resides in the cell wall. The protein localises to the extracellular space. It localises to the apoplast. It catalyses the reaction breaks a beta-(1-&gt;4) bond in the backbone of a xyloglucan and transfers the xyloglucanyl segment on to O-4 of the non-reducing terminal glucose residue of an acceptor, which can be a xyloglucan or an oligosaccharide of xyloglucan.. Catalyzes xyloglucan endohydrolysis (XEH) and/or endotransglycosylation (XET). Cleaves and religates xyloglucan polymers, an essential constituent of the primary cell wall, and thereby participates in cell wall construction of growing tissues. This is Probable xyloglucan endotransglucosylase/hydrolase protein 6 (XTH6) from Arabidopsis thaliana (Mouse-ear cress).